A 115-amino-acid polypeptide reads, in one-letter code: Probable malate:quinone oxidoreductase (115 aa).

The tract at residues 88–115 (QMPAAAPTATAKPAETPREASPQHDMAL) is disordered. A compositionally biased stretch (low complexity) spans 90–101 (PAAAPTATAKPA). Over residues 102-115 (ETPREASPQHDMAL) the composition is skewed to basic and acidic residues.

This sequence belongs to the MQO family. Requires FAD as cofactor.

It catalyses the reaction (S)-malate + a quinone = a quinol + oxaloacetate. It participates in carbohydrate metabolism; tricarboxylic acid cycle; oxaloacetate from (S)-malate (quinone route): step 1/1. The polypeptide is Probable malate:quinone oxidoreductase (mqo) (Klebsiella pneumoniae).